Here is a 348-residue protein sequence, read N- to C-terminus: NADH-ubiquinone oxidoreductase chain 2 (348 aa).

11 helical membrane passes run 3–23 (PVVL…TFIG), 25–45 (HWLL…PLMI), 67–87 (SALL…WSLL), 95–115 (ATLV…HFWL), 118–138 (VLQG…KLAP), 149–171 (LNSN…GGLN), 178–198 (ILAY…HYSP), 203–223 (LNLA…KLFN), 240–260 (LSII…LSGF), 274–294 (DLAI…FFYL), and 324–344 (LILM…PTIF).

It belongs to the complex I subunit 2 family.

The protein resides in the mitochondrion inner membrane. It catalyses the reaction a ubiquinone + NADH + 5 H(+)(in) = a ubiquinol + NAD(+) + 4 H(+)(out). Core subunit of the mitochondrial membrane respiratory chain NADH dehydrogenase (Complex I) that is believed to belong to the minimal assembly required for catalysis. Complex I functions in the transfer of electrons from NADH to the respiratory chain. The immediate electron acceptor for the enzyme is believed to be ubiquinone. This chain is NADH-ubiquinone oxidoreductase chain 2 (MT-ND2), found in Squalus acanthias (Spiny dogfish).